A 172-amino-acid chain; its full sequence is C-phycocyanin beta chain (172 aa).

The residue at position 72 (Asn-72) is an N4-methylasparagine. (2R,3E)-phycocyanobilin contacts are provided by Cys-82 and Cys-153.

Belongs to the phycobiliprotein family. As to quaternary structure, heterodimer of an alpha and a beta subunit, which further assembles into trimers and the trimers into hexamers. The basic functional unit of phycobiliproteins is a ring-shaped hexamer formed from two back-to-back trimers contacting via the alpha chain subunits. The trimers are composed of alpha/beta subunit heterodimers arranged around a three-fold axis of symmetry. The phycoerythrins also contain a gamma subunit which is located in the center of the hexamer. In terms of processing, contains two covalently linked bilin chromophores.

It is found in the plastid. It localises to the chloroplast thylakoid membrane. Functionally, light-harvesting photosynthetic bile pigment-protein from the phycobiliprotein complex (phycobilisome, PBS). Phycocyanin is the major phycobiliprotein in the PBS rod. The chain is C-phycocyanin beta chain (cpcB) from Pyropia haitanensis (Red seaweed).